Reading from the N-terminus, the 243-residue chain is tRNA pseudouridine synthase A (243 aa).

Aspartate 53 functions as the Nucleophile in the catalytic mechanism. Tyrosine 111 lines the substrate pocket.

The protein belongs to the tRNA pseudouridine synthase TruA family. In terms of assembly, homodimer.

The enzyme catalyses uridine(38/39/40) in tRNA = pseudouridine(38/39/40) in tRNA. Functionally, formation of pseudouridine at positions 38, 39 and 40 in the anticodon stem and loop of transfer RNAs. This is tRNA pseudouridine synthase A from Chlorobium limicola (strain DSM 245 / NBRC 103803 / 6330).